A 401-amino-acid chain; its full sequence is Argininosuccinate synthase (401 aa).

ATP-binding positions include 8 to 16 (AYSGGLDTS) and alanine 35. The L-citrulline site is built by tyrosine 86 and serine 91. Glycine 116 is a binding site for ATP. The L-aspartate site is built by threonine 118, asparagine 122, and aspartate 123. Asparagine 122 contributes to the L-citrulline binding site. L-citrulline is bound by residues arginine 126, serine 175, serine 184, glutamate 260, and tyrosine 272.

Belongs to the argininosuccinate synthase family. Type 1 subfamily. Homotetramer.

Its subcellular location is the cytoplasm. The enzyme catalyses L-citrulline + L-aspartate + ATP = 2-(N(omega)-L-arginino)succinate + AMP + diphosphate + H(+). Its pathway is amino-acid biosynthesis; L-arginine biosynthesis; L-arginine from L-ornithine and carbamoyl phosphate: step 2/3. This Carboxydothermus hydrogenoformans (strain ATCC BAA-161 / DSM 6008 / Z-2901) protein is Argininosuccinate synthase.